Here is a 135-residue protein sequence, read N- to C-terminus: Transcription antitermination protein NusB (135 aa).

Belongs to the NusB family.

Involved in transcription antitermination. Required for transcription of ribosomal RNA (rRNA) genes. Binds specifically to the boxA antiterminator sequence of the ribosomal RNA (rrn) operons. The protein is Transcription antitermination protein NusB of Lacticaseibacillus casei (strain BL23) (Lactobacillus casei).